We begin with the raw amino-acid sequence, 956 residues long: Isoleucine--tRNA ligase (956 aa).

The 'HIGH' region signature appears at 60–70 (PYANGHIHVGH). Glutamate 583 lines the L-isoleucyl-5'-AMP pocket. A 'KMSKS' region motif is present at residues 624-628 (KMSKS). Position 627 (lysine 627) interacts with ATP. Zn(2+) is bound by residues cysteine 921, cysteine 924, cysteine 938, and cysteine 941.

It belongs to the class-I aminoacyl-tRNA synthetase family. IleS type 1 subfamily. In terms of assembly, monomer. Zn(2+) serves as cofactor.

It localises to the cytoplasm. It carries out the reaction tRNA(Ile) + L-isoleucine + ATP = L-isoleucyl-tRNA(Ile) + AMP + diphosphate. Functionally, catalyzes the attachment of isoleucine to tRNA(Ile). As IleRS can inadvertently accommodate and process structurally similar amino acids such as valine, to avoid such errors it has two additional distinct tRNA(Ile)-dependent editing activities. One activity is designated as 'pretransfer' editing and involves the hydrolysis of activated Val-AMP. The other activity is designated 'posttransfer' editing and involves deacylation of mischarged Val-tRNA(Ile). This chain is Isoleucine--tRNA ligase, found in Aquifex aeolicus (strain VF5).